We begin with the raw amino-acid sequence, 377 residues long: Endoplasmic reticulum-Golgi intermediate compartment protein 2 (377 aa).

The Cytoplasmic portion of the chain corresponds to 1–33 (MRRLNRRKTLSLVKELDAFPKVPDSYVETSASG). A helical membrane pass occupies residues 34-54 (GTVSLIAFTTMALLTIMEFSV). Topologically, residues 55-319 (YQDTWMKYEY…PFWQFFVRLC (265 aa)) are lumenal. A helical transmembrane segment spans residues 320–340 (GIIGGIFSTTGMLHGIGKFIV). At 341–377 (EIICCRFRLGSYKPVRSVPFADGHTDNHLPLLENNTH) the chain is on the cytoplasmic side.

It belongs to the ERGIC family. In terms of assembly, may form a heteromeric complex composed of ERGIC1, ERGIC2 and ERGIC3. Interacts with ERGIC3, the interaction is required for the stable expression of both proteins. May interact with EEF1A1.

The protein localises to the endoplasmic reticulum-Golgi intermediate compartment membrane. It is found in the golgi apparatus. Its subcellular location is the cis-Golgi network membrane. The protein resides in the endoplasmic reticulum membrane. It localises to the cytoplasm. The protein localises to the nucleus. Its function is as follows. Possible role in transport between endoplasmic reticulum and Golgi. This Mus musculus (Mouse) protein is Endoplasmic reticulum-Golgi intermediate compartment protein 2 (Ergic2).